The following is a 226-amino-acid chain: MGISDNDVQKQLRHMMAFIEQEANEKAEEIDAKAEEEFNIEKGRLVQQQRQKIMEFFEKKEKQVELQRKIQASNSLNAGRLRCLKAREDHIGAVLDEARSNLSRISGDAARYPAILKGLVMQGLLQLLEKEVVLRCREKDLRLVEQLLPECLDGLQKEWGSTTKVVLDKQNFLPSESAGGVELSARAGKIKVSSTLESRLELIANQIVPQVRTALFGPNPNRSFFD.

Belongs to the V-ATPase E subunit family. As to quaternary structure, V-ATPase is a heteromultimeric enzyme made up of two complexes: the ATP-hydrolytic V1 complex and the proton translocation V0 complex. The V1 complex consists of three catalytic AB heterodimers that form a heterohexamer, three peripheral stalks each consisting of EG heterodimers, one central rotor including subunits D and F, and the regulatory subunits C and H. The proton translocation complex V0 consists of the proton transport subunit a, a ring of proteolipid subunits c9c'', rotary subunit d, subunits e and f, and the accessory subunits vah-19/Ac45 and vah-20/PRR. As to expression, expressed in the excretory cell and syncytial hypodermal cells (at protein level). Expressed in the intestine (at protein level).

It is found in the cytoplasm. The protein resides in the apical cell membrane. Subunit of the V1 complex of vacuolar(H+)-ATPase (V-ATPase), a multisubunit enzyme composed of a peripheral complex (V1) that hydrolyzes ATP and a membrane integral complex (V0) that translocates protons. V-ATPase is responsible for acidifying and maintaining the pH of intracellular compartments and in some cell types, is targeted to the plasma membrane, where it is responsible for acidifying the extracellular environment. Regulates pH homeostasis in the intestine. Probably by regulating cytoplasmic pH, required for cell survival in the intestine and hypodermis. Involved in receptor-mediated endocytosis. Involved in embryogenesis and larval development. This chain is V-type proton ATPase subunit E, found in Caenorhabditis elegans.